Here is a 298-residue protein sequence, read N- to C-terminus: MERLTLPLGGAAAVDEYLEYRRIVGEDDGGKLFTPEEYEEYKRKVLPLRLQNRLFVSWRSPTGMDCKLVGPETLCFCTHRYKQHKTDLEAIPQQCPIDLPCQVTGCQCRAYLYVPLNGSQPIRCRCKHFADQHSAAPGFTCNTCSKCSGFHSCFTCACGQPAYAHDTVVETKQERLAQEKPVGQDIPYAAMGGLTGFSSLAEGYMRLDDSGIGVPSVEFLESPITAVDSPFLKAFQASSSSSPETLTDVGTSSQVSSLRRPEEDDMAFFERRYQERMKMEKAAKWKGKAPLPSATKPS.

Over residues 241–257 the composition is skewed to polar residues; it reads SSPETLTDVGTSSQVSS. A disordered region spans residues 241 to 263; that stretch reads SSPETLTDVGTSSQVSSLRRPEE.

The protein belongs to the FAM221 family.

This Homo sapiens (Human) protein is Protein FAM221A (FAM221A).